We begin with the raw amino-acid sequence, 302 residues long: Bacteriochlorophyll synthase 33 kDa chain (302 aa).

9 consecutive transmembrane segments (helical) span residues 25-45 (ITWFPPIWAYLCGTVSVGIWP), 49-69 (WPLVLLGMVLAGPLVCGMSQA), 97-117 (WGLYIALLMTVLSLAVGWMLG), 119-139 (WGFGATVFGVLAAWAYSVEPI), 145-165 (GWWGPGLVALCYEGLPWFTGA), 166-186 (AVLSAGAPSFFIVTVALLYAF), 223-243 (LACTVMAMAQILVITLLVIWG), 246-266 (IHAGIITALLVAQLFAMRVLL), and 275-295 (WYNGTGVTLYVLGMMVAAFAI).

It localises to the cell membrane. The protein operates within porphyrin-containing compound metabolism; bacteriochlorophyll biosynthesis (light-independent). Functionally, catalyzes the esterification of bacteriochlorophyllide a by geranylgeraniol-PPi. This Cereibacter sphaeroides (strain ATCC 17023 / DSM 158 / JCM 6121 / CCUG 31486 / LMG 2827 / NBRC 12203 / NCIMB 8253 / ATH 2.4.1.) (Rhodobacter sphaeroides) protein is Bacteriochlorophyll synthase 33 kDa chain (bchG).